A 456-amino-acid polypeptide reads, in one-letter code: UDP-N-acetylmuramoylalanine--D-glutamate ligase (456 aa).

An ATP-binding site is contributed by 113-119 (GTNGKTT).

This sequence belongs to the MurCDEF family.

It is found in the cytoplasm. It catalyses the reaction UDP-N-acetyl-alpha-D-muramoyl-L-alanine + D-glutamate + ATP = UDP-N-acetyl-alpha-D-muramoyl-L-alanyl-D-glutamate + ADP + phosphate + H(+). It participates in cell wall biogenesis; peptidoglycan biosynthesis. Functionally, cell wall formation. Catalyzes the addition of glutamate to the nucleotide precursor UDP-N-acetylmuramoyl-L-alanine (UMA). In Rippkaea orientalis (strain PCC 8801 / RF-1) (Cyanothece sp. (strain PCC 8801)), this protein is UDP-N-acetylmuramoylalanine--D-glutamate ligase.